The chain runs to 425 residues: Histidine--tRNA ligase (425 aa).

The protein belongs to the class-II aminoacyl-tRNA synthetase family. Homodimer.

The protein resides in the cytoplasm. The enzyme catalyses tRNA(His) + L-histidine + ATP = L-histidyl-tRNA(His) + AMP + diphosphate + H(+). The polypeptide is Histidine--tRNA ligase (Aeromonas salmonicida (strain A449)).